Here is a 900-residue protein sequence, read N- to C-terminus: Formin-like protein 5 (900 aa).

The helical; Signal-anchor transmembrane segment at 15–32 (SRLVFWLILFSGLLVITL) threads the bilayer. The disordered stretch occupies residues 136–209 (RNLATKPGSS…PVSPAKKKED (74 aa)). A compositionally biased stretch (pro residues) spans 160–173 (PPRPPTRPKSPPPR). Residues 214–234 (IIIAVVVTAVSTFLLAALFFL) traverse the membrane as a helical segment. Disordered regions lie at residues 273–440 (SVKG…DAPK) and 849–900 (ARGR…SDSD). The span at 281 to 304 (HQSFNIYSNQGKMSSFDGSNSDTS) shows a compositional bias: polar residues. A compositionally biased stretch (basic and acidic residues) spans 307-316 (LEERLSHEGL). Over residues 359–368 (FLKVSSKKAS) the composition is skewed to low complexity. Positions 369–429 (APPPPVPAPQ…GPKAPRPPSG (61 aa)) are enriched in pro residues. Residues 433–865 (ALDDDAPKTK…MARKQGSTAS (433 aa)) enclose the FH2 domain. Over residues 860–876 (QGSTASASSETPRQTPS) the composition is skewed to polar residues.

The protein belongs to the formin-like family. Class-I subfamily. In terms of tissue distribution, expressed in the endosperm. Localizes to the cell plate, a plant-specific membranous component that is assembled at the plane of cell division.

Its subcellular location is the membrane. Might be involved in the organization and polarity of the actin cytoskeleton. Interacts with the barbed end of actin filaments and nucleates actin-filament polymerization in vitro. Seems to play a role in cytokinesis. The sequence is that of Formin-like protein 5 (FH5) from Arabidopsis thaliana (Mouse-ear cress).